Reading from the N-terminus, the 463-residue chain is Bifunctional protein GlmU (463 aa).

The tract at residues 1–228 (MEQALSIVVL…PAEVQGVNDR (228 aa)) is pyrophosphorylase. UDP-N-acetyl-alpha-D-glucosamine is bound by residues 10–13 (LAAG), Lys24, Gln75, 80–81 (GT), 102–104 (YGD), Gly138, Glu153, Asn168, and Asn226. Asp104 is a Mg(2+) binding site. Asn226 lines the Mg(2+) pocket. Positions 229–249 (VQLAAAERVWQRRQAEDWMRA) are linker. The interval 250-463 (GVTILDPDRF…RPDRGEGSDA (214 aa)) is N-acetyltransferase. Arg332 and Lys350 together coordinate UDP-N-acetyl-alpha-D-glucosamine. Catalysis depends on His362, which acts as the Proton acceptor. Tyr365 and Asn376 together coordinate UDP-N-acetyl-alpha-D-glucosamine. Residues Ala379, 385–386 (NY), Ser404, Ala422, and Arg439 contribute to the acetyl-CoA site. Residues 437–463 (VARSAQRSIHGWRRPGQRPDRGEGSDA) are disordered. The span at 453–463 (QRPDRGEGSDA) shows a compositional bias: basic and acidic residues.

It in the N-terminal section; belongs to the N-acetylglucosamine-1-phosphate uridyltransferase family. In the C-terminal section; belongs to the transferase hexapeptide repeat family. As to quaternary structure, homotrimer. It depends on Mg(2+) as a cofactor.

The protein localises to the cytoplasm. It carries out the reaction alpha-D-glucosamine 1-phosphate + acetyl-CoA = N-acetyl-alpha-D-glucosamine 1-phosphate + CoA + H(+). The catalysed reaction is N-acetyl-alpha-D-glucosamine 1-phosphate + UTP + H(+) = UDP-N-acetyl-alpha-D-glucosamine + diphosphate. It functions in the pathway nucleotide-sugar biosynthesis; UDP-N-acetyl-alpha-D-glucosamine biosynthesis; N-acetyl-alpha-D-glucosamine 1-phosphate from alpha-D-glucosamine 6-phosphate (route II): step 2/2. It participates in nucleotide-sugar biosynthesis; UDP-N-acetyl-alpha-D-glucosamine biosynthesis; UDP-N-acetyl-alpha-D-glucosamine from N-acetyl-alpha-D-glucosamine 1-phosphate: step 1/1. The protein operates within bacterial outer membrane biogenesis; LPS lipid A biosynthesis. Its function is as follows. Catalyzes the last two sequential reactions in the de novo biosynthetic pathway for UDP-N-acetylglucosamine (UDP-GlcNAc). The C-terminal domain catalyzes the transfer of acetyl group from acetyl coenzyme A to glucosamine-1-phosphate (GlcN-1-P) to produce N-acetylglucosamine-1-phosphate (GlcNAc-1-P), which is converted into UDP-GlcNAc by the transfer of uridine 5-monophosphate (from uridine 5-triphosphate), a reaction catalyzed by the N-terminal domain. The sequence is that of Bifunctional protein GlmU from Alkalilimnicola ehrlichii (strain ATCC BAA-1101 / DSM 17681 / MLHE-1).